Reading from the N-terminus, the 182-residue chain is Adenylate kinase (182 aa).

Residue 12-17 (GAGKGT) coordinates ATP. Residues 32–61 (STGDLLRAEVKAGSELGKEAEAVMNRGELV) form an NMP region. AMP contacts are provided by residues T33, R38, 59-61 (ELV), 85-88 (GFPR), and Q92. The segment at 126-132 (ARGRADD) is LID. Residue R127 participates in ATP binding. Residues R129 and R140 each contribute to the AMP site. G168 contacts ATP.

The protein belongs to the adenylate kinase family. Monomer.

The protein localises to the cytoplasm. It catalyses the reaction AMP + ATP = 2 ADP. It participates in purine metabolism; AMP biosynthesis via salvage pathway; AMP from ADP: step 1/1. Its function is as follows. Catalyzes the reversible transfer of the terminal phosphate group between ATP and AMP. Plays an important role in cellular energy homeostasis and in adenine nucleotide metabolism. This is Adenylate kinase from Synechococcus sp. (strain RCC307).